Here is a 920-residue protein sequence, read N- to C-terminus: Translation initiation factor IF-2 (920 aa).

3 stretches are compositionally biased toward basic and acidic residues: residues 149-175, 186-197, and 255-265; these read EAEM…EKPV, AEKKATADKAAK, and AKPEGADDKKK. Disordered regions lie at residues 149 to 197 and 245 to 319; these read EAEM…KAAK and EAKK…KQRQ. A compositionally biased stretch (gly residues) spans 301–311; it reads SSGGVGGWRSG. The 168-residue stretch at 418–585 folds into the tr-type G domain; it reads PRPPVVTVMG…NVLLQAEILE (168 aa). The tract at residues 427–434 is G1; the sequence is GHVDHGKT. 427 to 434 serves as a coordination point for GTP; the sequence is GHVDHGKT. The segment at 452–456 is G2; sequence GITQH. The interval 473 to 476 is G3; sequence DTPG. GTP is bound by residues 473–477 and 527–530; these read DTPGH and NKID. A G4 region spans residues 527 to 530; sequence NKID. The interval 563 to 565 is G5; that stretch reads SAK.

It belongs to the TRAFAC class translation factor GTPase superfamily. Classic translation factor GTPase family. IF-2 subfamily.

It localises to the cytoplasm. Functionally, one of the essential components for the initiation of protein synthesis. Protects formylmethionyl-tRNA from spontaneous hydrolysis and promotes its binding to the 30S ribosomal subunits. Also involved in the hydrolysis of GTP during the formation of the 70S ribosomal complex. This Polynucleobacter asymbioticus (strain DSM 18221 / CIP 109841 / QLW-P1DMWA-1) (Polynucleobacter necessarius subsp. asymbioticus) protein is Translation initiation factor IF-2.